The sequence spans 331 residues: MFGLRRNAVIGLNLYCGGASLGAGGGSPAGARLVAEEAKARREGGGEAALLPGARVVARPPPVGAEDPDVTASAERRLHKSPGLLAVPPEEMAASAAAAIVSPEEELDGCEPEAIGKRPAVLPLLERVSEAAKSSGADGSLPSTPPPPEEEEDDLYRQSLEIISRYLREQATGSKDSKPLGEAGAAGRRALETLRRVGDGVQRNHETAFQGMLRKLDIKNEGDVKSFSRVMVHVFKDGVTNWGRIVTLISFGAFVAKHLKSVNQESFIEPLAETITDVLVRTKRDWLVKQRGWDGFVEFFHVQDLEGGIRNVLLAFAGVAGVGAGLAYLIR.

The PEST-like stretch occupies residues 85-156 (LAVPPEEMAA…PPEEEEDDLY (72 aa)). Serine 102 bears the Phosphoserine mark. Lysine 117 is covalently cross-linked (Glycyl lysine isopeptide (Lys-Gly) (interchain with G-Cter in ubiquitin)). The disordered stretch occupies residues 130–154 (EAAKSSGADGSLPSTPPPPEEEEDD). The residue at position 140 (serine 140) is a Phosphoserine; by GSK3-alpha and GSK3-beta. Phosphoserine is present on serine 143. Threonine 144 carries the post-translational modification Phosphothreonine; by MAPK. Glycyl lysine isopeptide (Lys-Gly) (interchain with G-Cter in ubiquitin) cross-links involve residues lysine 175 and lysine 178. The short motif at 190 to 204 (ALETLRRVGDGVQRN) is the BH3 element. The BH1 signature appears at 234–253 (VFKDGVTNWGRIVTLISFGA). The BH2 signature appears at 285-300 (DWLVKQRGWDGFVEFF). The chain crosses the membrane as a helical span at residues 308–330 (GIRNVLLAFAGVAGVGAGLAYLI).

It belongs to the Bcl-2 family. Interacts with HIF3A isoform 2 (via C-terminus domain). Interacts with BAD, BOK, BIK, BAX, BAK1, and TPT1. Interacts with BBC3, BMF and PMAIP1. Interacts with BOP. Interacts with BCL2L11; this interaction may sequester BCL2L11 and prevent its pro-apoptotic activity. Interacts with GIMAP5 and HSPA8/HSC70; the interaction between HSPA8 and MCL1 is impaired in the absence of GIMAP5. In terms of processing, cleaved by CASP3 during apoptosis, yielding a pro-apoptotic C-terminal fragment. Post-translationally, rapidly degraded in the absence of phosphorylation in the PEST region. Phosphorylated on Ser-140, by GSK3, in response to IL3/interleukin-3 withdrawal. Phosphorylation at Ser-140 induces ubiquitination and proteasomal degradation, abrogating the anti-apoptotic activity. Treatment with taxol or okadaic acid induces phosphorylation on additional sites. In terms of processing, ubiquitinated. Ubiquitination is induced by phosphorylation at Ser-140. Deubiquitinated by USP20; leading to increased stability.

It localises to the membrane. Its subcellular location is the cytoplasm. The protein localises to the mitochondrion. The protein resides in the nucleus. It is found in the nucleoplasm. Its function is as follows. Involved in the regulation of apoptosis versus cell survival, and in the maintenance of viability but not of proliferation. Mediates its effects by interactions with a number of other regulators of apoptosis. Isoform 2 has antiapoptotic activity. In Mus musculus (Mouse), this protein is Induced myeloid leukemia cell differentiation protein Mcl-1 homolog (Mcl1).